Reading from the N-terminus, the 158-residue chain is Glutathione peroxidase homolog BsaA (158 aa).

C36 is a catalytic residue.

The protein belongs to the glutathione peroxidase family.

In Staphylococcus aureus (strain COL), this protein is Glutathione peroxidase homolog BsaA (bsaA).